The primary structure comprises 670 residues: NAD-dependent histone deacetylase SIR2 (670 aa).

Disordered regions lie at residues 1 to 157 and 235 to 263; these read MTEY…EHPI and DNDD…PSPS. Acidic residues predominate over residues 45 to 68; the sequence is NEDVDVDADADVDADADADADAEE. Over residues 69-81 the composition is skewed to basic and acidic residues; sequence DAQKDILEETKAD. Residues 82–92 are compositionally biased toward acidic residues; that stretch reads ELDEVVDEYEE. A compositionally biased stretch (polar residues) spans 96–119; it reads SSNFNGTASDHVGITSSNTGSTAL. The segment covering 120–142 has biased composition (low complexity); sequence AASSADTNSGSGNGTGTMATNGT. Residues 239–261 are compositionally biased toward polar residues; it reads SLPQKNSSETKNVSDTYTATYPS. Residues 293–583 enclose the Deacetylase sirtuin-type domain; it reads RLTNFHTIDD…ALVAQKCGWD (291 aa). NAD(+) contacts are provided by residues 318–337 and 400–403; these read GAGI…EGFY and QNID. Residue His420 is the Proton acceptor of the active site. Cys428, Cys431, Cys452, and Cys455 together coordinate Zn(2+). NAD(+)-binding positions include 527–529, 552–554, and Cys569; these read GTS and NKD. Residues 617–670 are disordered; the sequence is AELEAEEEKHLPLQQSTAALTPPVSLSADSPGRSSSSSPQPPTQTDIANNQTST. A compositionally biased stretch (low complexity) spans 641 to 654; it reads SLSADSPGRSSSSS. A compositionally biased stretch (polar residues) spans 659 to 670; sequence TQTDIANNQTST.

The protein belongs to the sirtuin family. Class I subfamily. It depends on Zn(2+) as a cofactor.

The protein resides in the nucleus. It carries out the reaction N(6)-acetyl-L-lysyl-[protein] + NAD(+) + H2O = 2''-O-acetyl-ADP-D-ribose + nicotinamide + L-lysyl-[protein]. Functionally, NAD-dependent deacetylase, which asts as a key regulator of gene expression believed to help form modified chromatin structures on the genes it regulates. It is involved in telomeric silencing and in hm mating type loci silencing. This is NAD-dependent histone deacetylase SIR2 (SIR2) from Kluyveromyces lactis (strain ATCC 8585 / CBS 2359 / DSM 70799 / NBRC 1267 / NRRL Y-1140 / WM37) (Yeast).